The chain runs to 327 residues: Homeotic protein distal-less (327 aa).

The homeobox DNA-binding region spans 124–183 (MRKPRTIYSSLQLQQLNRRFQRTQYLALPERAELAASLGLTQTQVKIWFQNRRSKYKKMM). The interval 181–303 (KMMKAAQGPG…THHHNPPPQM (123 aa)) is disordered. The span at 231–249 (LPPGHSPTPSSTPVSELSP) shows a compositional bias: low complexity. A compositionally biased stretch (basic and acidic residues) spans 266 to 275 (QKPHWIDHKP). A compositionally biased stretch (pro residues) spans 276-286 (PPQMTPQPPHP).

As to expression, expressed in the embryo in limb primordia of the head and thoracic segments. Expressed in regions of the larval leg, wing, antennal and haltere disks that form the distal-most regions of the mature structures (in the leg this corresponds to the tarsus and the distal tibia). Found in the optic center of the developing larval brain.

It localises to the nucleus. Functionally, transcription factor that plays a role in larval and adult appendage development. Specifies the identity of ventral appendages (including legs and antennae) and suppresses dorsal appendage development. Involved in patterning the distal-proximal limb axis. May control the adhesive properties of cells during limb morphogenesis. Also has a secondary role in the normal patterning of the wing margin. This is Homeotic protein distal-less (Dll) from Drosophila melanogaster (Fruit fly).